The following is a 1105-amino-acid chain: Lysylphosphatidylglycerol biosynthesis bifunctional protein LysX (1105 aa).

Residues 1 to 603 (MTVTKPRSVQ…LLHHDGSAPD (603 aa)) form a phosphatidylglycerol lysyltransferase region. The next 7 helical transmembrane spans lie at 20 to 40 (VPAAAGWAVGVIATLSLLASI), 62 to 82 (FPDTSFAWSFVLALLAAALAA), 86 to 106 (IAWLLLLTNVVLAAFLNAADI), 117 to 137 (FGENLGFEVHVVAIVVLVLGY), 154 to 174 (AVLVAGGAIGILVSWGLVDLF), 186 to 203 (YVANRVIGFALADPDLFT), and 208 to 228 (VFLNAMFGLFGALALIAATIV). The tract at residues 604-1105 (VSGLRQSAIA…TLPFPLAKPH (502 aa)) is lysine--tRNA ligase. Mg(2+) is bound by residues Asp1017 and Glu1024.

In the N-terminal section; belongs to the LPG synthetase family. It in the C-terminal section; belongs to the class-II aminoacyl-tRNA synthetase family. Requires Mg(2+) as cofactor.

The protein resides in the cell membrane. It carries out the reaction tRNA(Lys) + L-lysine + ATP = L-lysyl-tRNA(Lys) + AMP + diphosphate. The catalysed reaction is L-lysyl-tRNA(Lys) + a 1,2-diacyl-sn-glycero-3-phospho-(1'-sn-glycerol) = a 1,2-diacyl-sn-glycero-3-phospho-1'-(3'-O-L-lysyl)-sn-glycerol + tRNA(Lys). In terms of biological role, catalyzes the production of L-lysyl-tRNA(Lys)transfer and the transfer of a lysyl group from L-lysyl-tRNA(Lys) to membrane-bound phosphatidylglycerol (PG), which produces lysylphosphatidylglycerol (LPG), one of the components of the bacterial membrane with a positive net charge. LPG synthesis contributes to the resistance to cationic antimicrobial peptides (CAMPs) and likely protects M.tuberculosis against the CAMPs produced by competiting microorganisms (bacteriocins). In fact, the modification of anionic phosphatidylglycerol with positively charged L-lysine results in repulsion of the peptides. The protein is Lysylphosphatidylglycerol biosynthesis bifunctional protein LysX (lysX) of Mycobacterium ulcerans (strain Agy99).